Here is a 220-residue protein sequence, read N- to C-terminus: Ribose-5-phosphate isomerase A (220 aa).

Residues 25–28 (TGST), 80–83 (DGAD), and 93–96 (KGGG) each bind substrate. The Proton acceptor role is filled by Glu102. Lys120 contacts substrate.

It belongs to the ribose 5-phosphate isomerase family. Homodimer.

It catalyses the reaction aldehydo-D-ribose 5-phosphate = D-ribulose 5-phosphate. It participates in carbohydrate degradation; pentose phosphate pathway; D-ribose 5-phosphate from D-ribulose 5-phosphate (non-oxidative stage): step 1/1. Functionally, catalyzes the reversible conversion of ribose-5-phosphate to ribulose 5-phosphate. The sequence is that of Ribose-5-phosphate isomerase A from Bacillus cereus (strain ZK / E33L).